The primary structure comprises 351 residues: c-di-GMP synthase (351 aa).

Belongs to the CD-NTase family. E05 subfamily.

The enzyme catalyses 2 GTP = 3',3'-c-di-GMP + 2 diphosphate. Functionally, cyclic nucleotide synthase (second messenger synthase) of a CBASS antivirus system. CBASS (cyclic oligonucleotide-based antiphage signaling system) provides immunity against bacteriophage. The CD-NTase protein synthesizes cyclic nucleotides in response to infection; these serve as specific second messenger signals. The signals activate a diverse range of effectors, leading to bacterial cell death and thus abortive phage infection. A type I-D(GG) CBASS system. Its function is as follows. Cyclic dinucleotide synthase that catalyzes the synthesis of c-di-GMP, has no activity with other NTP substrates. The chain is c-di-GMP synthase (cdnE) from Capnocytophaga granulosa (strain ATCC 51502 / DSM 11449 / JCM 8566 / LMG 16022 / NCTC 12948 / B0611).